We begin with the raw amino-acid sequence, 93 residues long: Large ribosomal subunit protein uL23cz/uL23cy (93 aa).

Belongs to the universal ribosomal protein uL23 family. In terms of assembly, part of the 50S ribosomal subunit.

It is found in the plastid. The protein localises to the chloroplast. In terms of biological role, binds to 23S rRNA. The chain is Large ribosomal subunit protein uL23cz/uL23cy (rpl23-A) from Citrus sinensis (Sweet orange).